A 249-amino-acid polypeptide reads, in one-letter code: Putative type I specificity subunit S.MpnORF615P (249 aa).

The protein belongs to the type-I restriction system S methylase family. As to quaternary structure, the methyltransferase is composed of M and S polypeptides.

The specificity (S) subunit of a type I methyltransferase (MTase); this subunit dictates DNA sequence specificity. The single R subunit has multiple frameshifts and is probably not expressed. This is Putative type I specificity subunit S.MpnORF615P from Mycoplasma pneumoniae (strain ATCC 29342 / M129 / Subtype 1) (Mycoplasmoides pneumoniae).